Here is a 291-residue protein sequence, read N- to C-terminus: Short-chain dehydrogenase/reductase GME11359 (291 aa).

Residues Leu18, Asp67, Asn96, Tyr177, Lys181, and Val209 each contribute to the NADP(+) site. Tyr177 acts as the Proton acceptor in catalysis. Residue Lys181 is the Lowers pKa of active site Tyr of the active site.

The protein belongs to the short-chain dehydrogenases/reductases (SDR) family.

The protein operates within secondary metabolite biosynthesis. Its function is as follows. Short-chain dehydrogenase/reductase; part of the gene cluster that mediates the biosynthesis of dibenzodioxocinones such as pestalotiollide B, a novel class of inhibitors against cholesterol ester transfer protein (CEPT). The biosynthesis initiates from condensation of acetate and malonate units catalyzed by the non-reducing PKS pks8/GME11356. Pks8/GME11356 lacks a thioesterase (TE) domain, which is important to the cyclizing of the third ring of atrochrysone carboxylic acid, and the esterase GME11355 might play the role of TE and catalyzes the cyclization reaction of the C ring. The lactamase-like protein GME11357 (or other beta-lactamases in Pestalotiopsis microspora) probably hydrolyzes the thioester bond between the ACP of pks8/GME11356 and the intermediate to release atrochrysone carboxylic acid, which is spontaneously dehydrates to form endocrocin anthrone. Endocrocin anthrone is further converted to emodin via the endocrocin intermediate. Emodin is then oxidized by several enzymes such as the Baeyer-Villiger oxidase GME11358, the oxidoreductase GME11367, the short chain dehydrogenase/reductase GME11373, as well as by other oxidoreductases from the cluster, to modify the A and C rings and open the B ring, and finally yield monodictyphenone. The prenyltransferase GME11375 may catalyze the addition reaction between the C5 side chains and the carbon bone of dibenzodioxocinones. The remaining biochemical reactions to the final product dibenzodioxocinones should be methylation catalyzed by methyltransferase GME11366 and reduction and lactonization reaction catalyzed by a series of oxidordeuctases. In Pestalotiopsis microspora, this protein is Short-chain dehydrogenase/reductase GME11359.